The chain runs to 104 residues: Probable quinol monooxygenase YgiN (104 aa).

The 99-residue stretch at 2–100 (LTVIAEIRTR…DVLEMNIRIL (99 aa)) folds into the ABM domain.

As to quaternary structure, homodimer.

It carries out the reaction menadiol + 2 O2 = menadione + 2 superoxide + 2 H(+). Can oxidize menadiol to menadione. In Escherichia coli O157:H7, this protein is Probable quinol monooxygenase YgiN (ygiN).